The chain runs to 362 residues: Very-long-chain (3R)-3-hydroxyacyl-CoA dehydratase (362 aa).

Over 1 to 149 the chain is Cytoplasmic; sequence MADCSLRPHV…DPFKHLKKGY (149 aa). A CS domain is found at 5–94; that stretch reads SLRPHVHWAQ…KESSWWERLT (90 aa). Positions 111–135 form a coiled coil; that stretch reads LDESDAEMELKEKEEEKINKMKIES. A helical membrane pass occupies residues 150–170; the sequence is LIMYNLVQFLGFSWIFVNMTV. Over 171 to 189 the chain is Lumenal; the sequence is RLFILGKDSFYDTFHTIAD. The chain crosses the membrane as a helical span at residues 190–210; sequence MMYFCQTLALMEILNSLIGLV. Over 211–212 the chain is Cytoplasmic; that stretch reads RS. Residues 213-233 form a helical membrane-spanning segment; sequence PLIPAVIQVFGRNFILFVVLG. Topologically, residues 234–242 are lumenal; it reads SLEEMQSKA. The helical transmembrane segment at 243 to 263 threads the bilayer; sequence VVFFLFYFWSIIELFRYPYYM. The Cytoplasmic portion of the chain corresponds to 264–282; it reads LSCMGIEWKPLTWLRYTSW. A helical transmembrane segment spans residues 283 to 303; it reads IPLYPLGGLAEAVCLIQSIPI. Catalysis depends on residues Y286 and E293. At 304 to 319 the chain is on the lumenal side; sequence FSETGKFSLGLPNPLN. Residues 320–340 form a helical membrane-spanning segment; that stretch reads VTIQFSFLLQMYLIALFLGLF. Residues 341 to 362 lie on the Cytoplasmic side of the membrane; the sequence is VNFRYLYKQRKQHLGPKKRKMK.

This sequence belongs to the very long-chain fatty acids dehydratase HACD family.

The protein localises to the endoplasmic reticulum membrane. The enzyme catalyses a very-long-chain (3R)-3-hydroxyacyl-CoA = a very-long-chain (2E)-enoyl-CoA + H2O. It carries out the reaction (3R)-hydroxyhexadecanoyl-CoA = (2E)-hexadecenoyl-CoA + H2O. It participates in lipid metabolism; fatty acid biosynthesis. Its function is as follows. Catalyzes the third of the four reactions of the long-chain fatty acids elongation cycle. This endoplasmic reticulum-bound enzymatic process, allows the addition of two carbons to the chain of long- and very long-chain fatty acids/VLCFAs per cycle. This enzyme catalyzes the dehydration of the 3-hydroxyacyl-CoA intermediate into trans-2,3-enoyl-CoA, within each cycle of fatty acid elongation. Thereby, it participates in the production of VLCFAs of different chain lengths that are involved in multiple biological processes as precursors of membrane lipids and lipid mediators. Involved in Rac1-signaling pathways leading to the modulation of gene expression. The chain is Very-long-chain (3R)-3-hydroxyacyl-CoA dehydratase from Gallus gallus (Chicken).